The primary structure comprises 565 residues: Galactoside 2-alpha-L-fucosyltransferase (565 aa).

The Cytoplasmic portion of the chain corresponds to 1–43 (MNMLIKRVIAIKNPRGDDNNNNKLSDLETLTDKCTTCPLTLMR). Residues 44 to 64 (VMAFFVVSFMLFSVLFSLSVV) traverse the membrane as a helical; Signal-anchor for type II membrane protein segment. At 65 to 565 (LRDPPSDAAI…MSWGLKLVDN (501 aa)) the chain is on the lumenal side. N-linked (GlcNAc...) asparagine glycosylation is found at N159, N263, N407, and N509.

Belongs to the glycosyltransferase 37 family.

The protein resides in the golgi apparatus. The protein localises to the golgi stack membrane. The protein operates within protein modification; protein glycosylation. Involved in cell wall biosynthesis. Adds the terminal fucosyl residue on xyloglucan side chains. This chain is Galactoside 2-alpha-L-fucosyltransferase (FT1), found in Pisum sativum (Garden pea).